A 1767-amino-acid chain; its full sequence is Endo-alpha-N-acetylgalactosaminidase (1767 aa).

Positions 1–39 (MNKGLFEKRCKYSIRKFSLGVASVMIGAAFFGTSPVLAD) are cleaved as a signal peptide. Basic and acidic residues-rich tracts occupy residues 61–75 (KEND…KVGE) and 84–111 (DGPK…DKPA). Disordered regions lie at residues 61–124 (KEND…VTPE) and 301–324 (VKTD…GPEV). Residues 112–124 (AAKPETPKTVTPE) show a composition bias toward low complexity. The span at 304–324 (DNQEGVKTEDTPAEKETGPEV) shows a compositional bias: basic and acidic residues. Positions 577, 579, 581, 583, and 588 each coordinate Ca(2+). Residues 602–893 (GWEKVKDITA…DVMTKYFQHF (292 aa)) are catalytic. Aspartate 658 contributes to the substrate binding site. Residue aspartate 764 is the Nucleophile of the active site. The Proton donor/acceptor role is filled by glutamate 796. Ca(2+)-binding residues include aspartate 1233, glutamate 1235, glutamate 1281, tryptophan 1284, and aspartate 1411. Residues 1711–1730 (LASEQGKTPDYKQEIARPET) are disordered. Basic and acidic residues predominate over residues 1717 to 1730 (KTPDYKQEIARPET). An LPXTG sorting signal motif is present at residues 1735–1739 (LPATG). Threonine 1738 is subject to Pentaglycyl murein peptidoglycan amidated threonine. The propeptide at 1739-1767 (GESQSDTALILASVSLALSALFVVKTKKD) is removed by sortase.

Belongs to the glycosyl hydrolase 101 family. A subfamily.

The protein resides in the secreted. It localises to the cell wall. It carries out the reaction a 3-O-[beta-D-galactosyl-(1-&gt;3)-N-acetyl-alpha-D-galactosaminyl]-L-threonyl-[protein] + H2O = beta-D-galactosyl-(1-&gt;3)-N-acetyl-D-galactosamine + L-threonyl-[protein]. It catalyses the reaction a 3-O-[beta-D-galactosyl-(1-&gt;3)-N-acetyl-alpha-D-galactosaminyl]-L-seryl-[protein] + H2O = beta-D-galactosyl-(1-&gt;3)-N-acetyl-D-galactosamine + L-seryl-[protein]. Its function is as follows. Involved in the breakdown of mucin-type O-linked glycans. Specifically removes the T-antigen disaccharide (Gal-beta-1,3-GalNAc-alpha) from extracellular host glycoproteins. Representative of a broadly important class of virulence factors. The polypeptide is Endo-alpha-N-acetylgalactosaminidase (Streptococcus pneumoniae serotype 4 (strain ATCC BAA-334 / TIGR4)).